A 222-amino-acid chain; its full sequence is UPF0128 protein TK2294 (222 aa).

This sequence belongs to the UPF0128 family.

This is UPF0128 protein TK2294 from Thermococcus kodakarensis (strain ATCC BAA-918 / JCM 12380 / KOD1) (Pyrococcus kodakaraensis (strain KOD1)).